The sequence spans 739 residues: Long-chain-fatty-acid--CoA ligase ACSBG2 (739 aa).

ATP contacts are provided by residues 287-295 (TSGTTGQPK), 478-483 (ELYGMS), Asp-556, Arg-571, and Lys-684.

This sequence belongs to the ATP-dependent AMP-binding enzyme family. Bubblegum subfamily.

It localises to the cytoplasm. The enzyme catalyses a long-chain fatty acid + ATP + CoA = a long-chain fatty acyl-CoA + AMP + diphosphate. The catalysed reaction is (5Z,8Z,11Z,14Z)-eicosatetraenoate + ATP + CoA = (5Z,8Z,11Z,14Z)-eicosatetraenoyl-CoA + AMP + diphosphate. It catalyses the reaction hexadecanoate + ATP + CoA = hexadecanoyl-CoA + AMP + diphosphate. It carries out the reaction (9Z)-octadecenoate + ATP + CoA = (9Z)-octadecenoyl-CoA + AMP + diphosphate. The enzyme catalyses (9Z,12Z)-octadecadienoate + ATP + CoA = (9Z,12Z)-octadecadienoyl-CoA + AMP + diphosphate. The catalysed reaction is tetracosanoate + ATP + CoA = tetracosanoyl-CoA + AMP + diphosphate. Functionally, catalyzes the conversion of fatty acids such as long chain and very long-chain fatty acids to their active form acyl-CoAs for both synthesis of cellular lipids, and degradation via beta-oxidation. Can activate diverse saturated, monosaturated and polyunsaturated fatty acids. The chain is Long-chain-fatty-acid--CoA ligase ACSBG2 from Xenopus laevis (African clawed frog).